We begin with the raw amino-acid sequence, 191 residues long: UMP-CMP kinase 2 (191 aa).

12 to 17 is a binding site for ATP; the sequence is GSGKGT. The tract at residues 32–62 is NMP; the sequence is SAGDLLRAERQREGSEFGALIESHIKNGSIV. A ribonucleoside 5'-phosphate contacts are provided by residues Arg38, 60 to 62, and 88 to 91; these read SIV and GFPR. Residue Asn95 participates in CMP binding. The LID stretch occupies residues 128–136; sequence NRGQGRTDD. Arg129 is an ATP binding site. A ribonucleoside 5'-phosphate-binding residues include Arg133 and Arg144. Arg172 contacts ATP.

This sequence belongs to the adenylate kinase family. UMP-CMP kinase subfamily. As to quaternary structure, monomer. The cofactor is Mg(2+). In terms of tissue distribution, expressed in neurons and the pharynx.

It localises to the cytoplasm. The protein resides in the nucleus. It carries out the reaction CMP + ATP = CDP + ADP. The catalysed reaction is dCMP + ATP = dCDP + ADP. It catalyses the reaction UMP + ATP = UDP + ADP. In terms of biological role, catalyzes the phosphorylation of pyrimidine nucleoside monophosphates at the expense of ATP. Plays an important role in de novo pyrimidine nucleotide biosynthesis. Has preference for UMP and CMP as phosphate acceptors. The chain is UMP-CMP kinase 2 from Caenorhabditis elegans.